Consider the following 182-residue polypeptide: Prorelaxin (182 aa).

Positions 1-24 (MPRLFSYLLGVWLLLSQLPREIPG) are cleaved as a signal peptide. Gln-25 carries the pyrrolidone carboxylic acid modification. Intrachain disulfides connect Cys-34/Cys-169, Cys-46/Cys-182, and Cys-168/Cys-173. Residues 57-154 (SLEEPQLETG…LKNLGLDKHS (98 aa)) constitute a propeptide, connecting peptide. Positions 159–160 (LF) are excised as a propeptide.

Belongs to the insulin family. Heterodimer of a B chain and an A chain linked by two disulfide bonds.

It localises to the secreted. Relaxin is an ovarian hormone that acts with estrogen to produce dilatation of the birth canal in many mammals. This chain is Prorelaxin (RLN), found in Sus scrofa (Pig).